The following is a 398-amino-acid chain: E3 ubiquitin-protein ligase MARCHF11 (398 aa).

The segment covering 1–14 has biased composition (basic and acidic residues); the sequence is MSDEGSKRGSRADS. Positions 1 to 158 are disordered; the sequence is MSDEGSKRGS…GSGDQRSGHQ (158 aa). Positions 19-31 are enriched in pro residues; sequence PPLPPPPPPPPPG. 2 stretches are compositionally biased toward basic and acidic residues: residues 94–104 and 121–130; these read EGPRRLPEVKL and ACREGERRGT. The segment at 158-218 adopts an RING-CH-type zinc-finger fold; the sequence is QHQHHQPICK…ELCCYRYHVT (61 aa). Positions 166, 169, 182, 184, 192, 195, 208, and 211 each coordinate Zn(2+). Helical transmembrane passes span 241–261 and 274–294; these read MIAV…LLWS and ILFQ…IGLI. The YXXL motif motif lies at 367 to 370; sequence YVLL. Positions 395–398 match the PDZ-binding motif; it reads VTSV.

In terms of assembly, interacts (YXXL motif) with AP1M1. Interacts (via PDZ-binding motif) with LIN7A. Interacts with unidentified fucose glycoproteins. Predominantly expressed in testis. Present in early developing spermatids. Not present in spermatogonia, spermatocytes or somatic cells (i.e. peritubular, Leydig, and Sertoli cells). Present in early round spermatids at step 4, remains until step 11, then it decreases at steps 12-15, and diminishes after step 16 (at protein level). Also expressed at lower level in brain.

It is found in the cytoplasmic vesicle membrane. The catalysed reaction is S-ubiquitinyl-[E2 ubiquitin-conjugating enzyme]-L-cysteine + [acceptor protein]-L-lysine = [E2 ubiquitin-conjugating enzyme]-L-cysteine + N(6)-ubiquitinyl-[acceptor protein]-L-lysine.. Its pathway is protein modification; protein ubiquitination. E3 ubiquitin-protein ligase that mediates polyubiquitination of CD4. E3 ubiquitin ligases accept ubiquitin from an E2 ubiquitin-conjugating enzyme in the form of a thioester and then directly transfer the ubiquitin to targeted substrates. May play a role in ubuquitin-dependent protein sorting in developmenting spermatids. In Rattus norvegicus (Rat), this protein is E3 ubiquitin-protein ligase MARCHF11 (Marchf11).